Reading from the N-terminus, the 262-residue chain is tRNA pseudouridine synthase A (262 aa).

The active-site Nucleophile is D51. Y109 is a binding site for substrate.

This sequence belongs to the tRNA pseudouridine synthase TruA family. Homodimer.

The enzyme catalyses uridine(38/39/40) in tRNA = pseudouridine(38/39/40) in tRNA. Its function is as follows. Formation of pseudouridine at positions 38, 39 and 40 in the anticodon stem and loop of transfer RNAs. This is tRNA pseudouridine synthase A from Legionella pneumophila (strain Lens).